Here is a 151-residue protein sequence, read N- to C-terminus: Protein Turandot Z (151 aa).

The N-terminal stretch at 1 to 23 (MSRLIHLSFVLALLACLTGPISA) is a signal peptide.

Belongs to the Turandot family.

It is found in the secreted. In terms of biological role, a humoral factor that may play a role in stress tolerance. The protein is Protein Turandot Z of Drosophila pseudoobscura pseudoobscura (Fruit fly).